Reading from the N-terminus, the 320-residue chain is Cytochrome f (320 aa).

Positions 1–35 are cleaved as a signal peptide; that stretch reads MNFFTHKKNNFGSFVTIFSFLVALGVTNLTPAAEA. Heme contacts are provided by Tyr-36, Cys-56, Cys-59, and His-60. A helical transmembrane segment spans residues 286–306; the sequence is IQGLLVFFATVLFAQVLLVLK.

It belongs to the cytochrome f family. The 4 large subunits of the cytochrome b6-f complex are cytochrome b6, subunit IV (17 kDa polypeptide, petD), cytochrome f and the Rieske protein, while the 4 small subunits are PetG, PetL, PetM and PetN. The complex functions as a dimer. It depends on heme as a cofactor.

It is found in the plastid. The protein localises to the chloroplast thylakoid membrane. In terms of biological role, component of the cytochrome b6-f complex, which mediates electron transfer between photosystem II (PSII) and photosystem I (PSI), cyclic electron flow around PSI, and state transitions. The sequence is that of Cytochrome f from Tetradesmus obliquus (Green alga).